Reading from the N-terminus, the 444-residue chain is Inward rectifier potassium channel 4 (444 aa).

Residues 1 to 55 (MHGHNRNGQAHVPRRKRRNRFVKKNGQCNVYFANLSNKSQRYMADIFTTCVDTRW) are Cytoplasmic-facing. The helical transmembrane segment at 56–80 (RYMLMLFSAAFLVSWLFFGLLFWCI) threads the bilayer. Topologically, residues 81–119 (AFFHGDLEASPSVPAAGAPGGNGGAAPAAPKPCIMHVNG) are extracellular. The helical; Pore-forming intramembrane region spans 120 to 131 (FLGAFLFSVETQ). Residues 132-138 (TTIGYGF) constitute an intramembrane region (pore-forming). The Selectivity filter signature appears at 133–138 (TIGYGF). The Extracellular portion of the chain corresponds to 139–147 (RCVTEECPL). A helical transmembrane segment spans residues 148–169 (AVIAVVVQSIVGCVIDSFMIGT). Residues 170–444 (IMAKMARPKK…NISYRRESAI (275 aa)) are Cytoplasmic-facing. The short motif at 442–444 (SAI) is the PDZ-binding element.

This sequence belongs to the inward rectifier-type potassium channel (TC 1.A.2.1) family. KCNJ4 subfamily. As to quaternary structure, homomultimeric and heteromultimeric association with KCNJ2 and KCNJ12. Interacts with DLG2 and DLG4. Associates, via its PDZ-recognition domain, with a complex containing LIN7A, LIN7B, LIN7C, DLG1, CASK and APBA1. Interacts with TAX1BP3. TAX1BP3 competes with LIN7 family members for KCNJ4 binding.

It localises to the cell membrane. The protein resides in the postsynaptic cell membrane. The protein localises to the cytoplasmic vesicle membrane. It carries out the reaction K(+)(in) = K(+)(out). Inward rectifier potassium channels are characterized by a greater tendency to allow potassium to flow into the cell rather than out of it. Their voltage dependence is regulated by the concentration of extracellular potassium; as external potassium is raised, the voltage range of the channel opening shifts to more positive voltages. The inward rectification is mainly due to the blockage of outward current by internal magnesium. Can be blocked by extracellular barium and cesium. The sequence is that of Inward rectifier potassium channel 4 (KCNJ4) from Mesocricetus auratus (Golden hamster).